Consider the following 214-residue polypeptide: Large ribosomal subunit protein uL3 (214 aa).

Positions 133-153 (GRATHGNSRSHNVPGSIGMAQ) are disordered. Gln-153 carries the post-translational modification N5-methylglutamine.

It belongs to the universal ribosomal protein uL3 family. In terms of assembly, part of the 50S ribosomal subunit. Forms a cluster with proteins L14 and L19. Methylated by PrmB.

One of the primary rRNA binding proteins, it binds directly near the 3'-end of the 23S rRNA, where it nucleates assembly of the 50S subunit. This chain is Large ribosomal subunit protein uL3, found in Cupriavidus metallidurans (strain ATCC 43123 / DSM 2839 / NBRC 102507 / CH34) (Ralstonia metallidurans).